The following is a 169-amino-acid chain: Lipoprotein signal peptidase (169 aa).

Transmembrane regions (helical) follow at residues 59-79 and 84-104; these read PTVL…YVIW and TTLF…NMID. Residues Asp113 and Asp139 contribute to the active site. The helical transmembrane segment at 132 to 152 threads the bilayer; that stretch reads WPIFNIADSAITIGACMLMIF.

This sequence belongs to the peptidase A8 family.

Its subcellular location is the cell inner membrane. The enzyme catalyses Release of signal peptides from bacterial membrane prolipoproteins. Hydrolyzes -Xaa-Yaa-Zaa-|-(S,diacylglyceryl)Cys-, in which Xaa is hydrophobic (preferably Leu), and Yaa (Ala or Ser) and Zaa (Gly or Ala) have small, neutral side chains.. It participates in protein modification; lipoprotein biosynthesis (signal peptide cleavage). Functionally, this protein specifically catalyzes the removal of signal peptides from prolipoproteins. This Pelodictyon phaeoclathratiforme (strain DSM 5477 / BU-1) protein is Lipoprotein signal peptidase.